We begin with the raw amino-acid sequence, 578 residues long: MNRGNPQALRHPQVPLGIANIIGRSTFPSVEGYLALSLCVAFIASASVFTHFHSQPEIKRLLEEELRNNTRLTTAFGINIDTIAGSTVFQMAHYILTDTTLIWVAINSYFAILAMCTKLIIKLTFKELSRQEEVAARQAFLSYILLTIVYLSVVTGPQKGHRVMPWMIWGGVCGFLSHLQFVTCQRLKYTSPSCDRGSQRVSFISLFLFFVSIAMTFMVSRFQQHLEWQPAVLLYFDCLLAVFRSTYILFRCISSSRVFSFNPDSVRHFNYWLELATNFACELLQFLSYAQLFVFAPGLNLTSIFFLYHMKLTYNCMREQLGRHRTHKKIFEHIESAYPSVKAANSDDRCIVCWELLGTSRRLPCSHQFHDWCLMWWLAQDSSCPTCRYVIPSPQEEASRTDSGNGNTMFRFNGRTFGFFTLPSFTVEVGSSFGNIFGRAAEPTQEQLQSMLETVLEMFPQMSPETILADLRQSGSAQSTIENILEGRMGLNASLIPGVLDEDLSDDTDNELEYEEHVEVVQEPDRTRQRTWTKLSSSSGEAELSYYEIQRANMIETYRRKYLASDKAADLRAMGITE.

The helical transmembrane segment at 32-52 (GYLALSLCVAFIASASVFTHF) threads the bilayer. N68 carries N-linked (GlcNAc...) asparagine glycosylation. 7 helical membrane passes run 76-96 (FGIN…HYIL), 101-121 (LIWV…KLII), 134-154 (VAAR…LSVV), 163-183 (VMPW…QFVT), 202-222 (SFIS…VSRF), 230-250 (PAVL…YILF), and 286-306 (FLSY…SIFF). The RING-type; atypical zinc-finger motif lies at 350 to 388 (CIVCWELLGTSRRLPCSHQFHDWCLMWWLAQDSSCPTCR). Residues 447–489 (QLQSMLETVLEMFPQMSPETILADLRQSGSAQSTIENILEGRM) form the CUE domain. N492 carries N-linked (GlcNAc...) asparagine glycosylation.

The protein localises to the membrane. Its function is as follows. Proposed to have a role in neuroprotection. This Caenorhabditis briggsae protein is E3 ubiquitin-protein ligase hrd-like protein 1.